The chain runs to 496 residues: Squalene epoxidase ERG1 (496 aa).

Residues 1 to 16 lie on the Cytoplasmic side of the membrane; sequence MSAVNVAPELINADNT. Residues 17-37 traverse the membrane as a helical segment; that stretch reads ITYDAIVIGAGVIGPCVATGL. Residues 28–29, 48–49, R56, and R158 contribute to the FAD site; these read VI and ER. The Lumenal segment spans residues 38-474; sequence ARKGKKVLIV…FLGLPMALLE (437 aa). Glycyl lysine isopeptide (Lys-Gly) (interchain with G-Cter in ubiquitin) cross-links involve residues K284, K289, and K311. The FAD site is built by D335 and M348. Residues 475-495 traverse the membrane as a helical segment; it reads GIMILITAIRVFTPFLFGELI. Position 496 (G496) is a topological domain, cytoplasmic.

The protein belongs to the squalene monooxygenase family. Interacts with ERG28. Requires FAD as cofactor.

The protein localises to the microsome membrane. Its subcellular location is the endoplasmic reticulum membrane. It is found in the lipid droplet. It carries out the reaction squalene + reduced [NADPH--hemoprotein reductase] + O2 = (S)-2,3-epoxysqualene + oxidized [NADPH--hemoprotein reductase] + H2O + H(+). The protein operates within terpene metabolism; lanosterol biosynthesis; lanosterol from farnesyl diphosphate: step 2/3. Inhibited by the allylamine antimycotic drugs. Functionally, squalene epoxidase; part of the third module of ergosterol biosynthesis pathway that includes the late steps of the pathway. ERG1 catalyzes the epoxidation of squalene into 2,3-epoxysqualene. The third module or late pathway involves the ergosterol synthesis itself through consecutive reactions that mainly occur in the endoplasmic reticulum (ER) membrane. Firstly, the squalene synthase ERG9 catalyzes the condensation of 2 farnesyl pyrophosphate moieties to form squalene, which is the precursor of all steroids. Squalene synthase is crucial for balancing the incorporation of farnesyl diphosphate (FPP) into sterol and nonsterol isoprene synthesis. Secondly, the squalene epoxidase ERG1 catalyzes the stereospecific oxidation of squalene to (S)-2,3-epoxysqualene, which is considered to be a rate-limiting enzyme in steroid biosynthesis. Then, the lanosterol synthase ERG7 catalyzes the cyclization of (S)-2,3 oxidosqualene to lanosterol, a reaction that forms the sterol core. In the next steps, lanosterol is transformed to zymosterol through a complex process involving various demethylation, reduction and desaturation reactions. The lanosterol 14-alpha-demethylase ERG11 (also known as CYP51) catalyzes C14-demethylation of lanosterol to produce 4,4'-dimethyl cholesta-8,14,24-triene-3-beta-ol, which is critical for ergosterol biosynthesis. The C-14 reductase ERG24 reduces the C14=C15 double bond of 4,4-dimethyl-cholesta-8,14,24-trienol to produce 4,4-dimethyl-cholesta-8,24-dienol. 4,4-dimethyl-cholesta-8,24-dienol is substrate of the C-4 demethylation complex ERG25-ERG26-ERG27 in which ERG25 catalyzes the three-step monooxygenation required for the demethylation of 4,4-dimethyl and 4alpha-methylsterols, ERG26 catalyzes the oxidative decarboxylation that results in a reduction of the 3-beta-hydroxy group at the C-3 carbon to an oxo group, and ERG27 is responsible for the reduction of the keto group on the C-3. ERG28 has a role as a scaffold to help anchor ERG25, ERG26 and ERG27 to the endoplasmic reticulum and ERG29 regulates the activity of the iron-containing C4-methylsterol oxidase ERG25. Then, the sterol 24-C-methyltransferase ERG6 catalyzes the methyl transfer from S-adenosyl-methionine to the C-24 of zymosterol to form fecosterol. The C-8 sterol isomerase ERG2 catalyzes the reaction which results in unsaturation at C-7 in the B ring of sterols and thus converts fecosterol to episterol. The sterol-C5-desaturase ERG3 then catalyzes the introduction of a C-5 double bond in the B ring to produce 5-dehydroepisterol. The C-22 sterol desaturase ERG5 further converts 5-dehydroepisterol into ergosta-5,7,22,24(28)-tetraen-3beta-ol by forming the C-22(23) double bond in the sterol side chain. Finally, ergosta-5,7,22,24(28)-tetraen-3beta-ol is substrate of the C-24(28) sterol reductase ERG4 to produce ergosterol. This Saccharomyces cerevisiae (strain ATCC 204508 / S288c) (Baker's yeast) protein is Squalene epoxidase ERG1.